A 207-amino-acid polypeptide reads, in one-letter code: Histidine biosynthesis bifunctional protein HisIE (207 aa).

The tract at residues 1 to 117 is phosphoribosyl-AMP cyclohydrolase; it reads MSLVTTINWE…GKQEQPALVF (117 aa). Residues 118 to 207 are phosphoribosyl-ATP pyrophosphohydrolase; the sequence is LHQLEQVLAN…TEKLQERHNK (90 aa).

The protein in the N-terminal section; belongs to the PRA-CH family. It in the C-terminal section; belongs to the PRA-PH family.

It localises to the cytoplasm. The enzyme catalyses 1-(5-phospho-beta-D-ribosyl)-ATP + H2O = 1-(5-phospho-beta-D-ribosyl)-5'-AMP + diphosphate + H(+). It carries out the reaction 1-(5-phospho-beta-D-ribosyl)-5'-AMP + H2O = 1-(5-phospho-beta-D-ribosyl)-5-[(5-phospho-beta-D-ribosylamino)methylideneamino]imidazole-4-carboxamide. The protein operates within amino-acid biosynthesis; L-histidine biosynthesis; L-histidine from 5-phospho-alpha-D-ribose 1-diphosphate: step 2/9. It participates in amino-acid biosynthesis; L-histidine biosynthesis; L-histidine from 5-phospho-alpha-D-ribose 1-diphosphate: step 3/9. The protein is Histidine biosynthesis bifunctional protein HisIE of Photobacterium profundum (strain SS9).